Here is a 227-residue protein sequence, read N- to C-terminus: 2,3-bisphosphoglycerate-dependent phosphoglycerate mutase (227 aa).

Substrate contacts are provided by residues 7–14 (RHGFSEWN), 20–21 (TG), arginine 59, 86–89 (ERHY), lysine 97, 113–114 (RR), and 182–183 (GN). Histidine 8 functions as the Tele-phosphohistidine intermediate in the catalytic mechanism. Catalysis depends on glutamate 86, which acts as the Proton donor/acceptor.

It belongs to the phosphoglycerate mutase family. BPG-dependent PGAM subfamily. In terms of assembly, homodimer.

It catalyses the reaction (2R)-2-phosphoglycerate = (2R)-3-phosphoglycerate. It functions in the pathway carbohydrate degradation; glycolysis; pyruvate from D-glyceraldehyde 3-phosphate: step 3/5. In terms of biological role, catalyzes the interconversion of 2-phosphoglycerate and 3-phosphoglycerate. The sequence is that of 2,3-bisphosphoglycerate-dependent phosphoglycerate mutase from Haemophilus influenzae (strain PittGG).